We begin with the raw amino-acid sequence, 521 residues long: MTHFPVNIASDKQEFDPERWAKTPTTESSVNGENGTAPTSGLPSRHPSTGISVLIVGAGMGGLMTALECWRKGHDVAGILERSEGPVYSGDIIVMQPSAVSIIRHWPDMLHDMKAEQVHAVVSYETHDGRHIYGPTVPSFNDPEHLETRKGPFVAPAQVRRKFYRMLLRQVARCGLRVEYGKTVKSYFEDEKDGKGGVIIATTGEAEVRVADIVVAADGLKSPSEILIAGQHVPPRSSGLSIYRTAFPKDLAMQNELVRKRWSDSPPIWEYWLGPGMYLGVFVGDDIISFGFTPRDDIVEGTATESWEPDTDPETVAQAMLSGAGDWDPAVLALIRSAPKGAIVHWPLLWRDLRREWTSPAGRVVQVGDSAHSFIPTSGNGGSQALEDAITLATCLQLAGSSQRAYLGTKIYNLLRYERVSCAQKMSFVNSQLKTGTDWDAIWKDPAKIRTRFPKWIFQHDPEAYAYEKFGEAFAHLLDGREFVNTNYPPGHEFRAWTVEEVWRNIADGKRVEDLLDGDWS.

Positions methionine 1–serine 48 are disordered. Basic and acidic residues predominate over residues aspartate 11 to alanine 21. Polar residues predominate over residues threonine 23–serine 48. FAD contacts are provided by valine 94 and arginine 160. Active-site residues include arginine 244 and tyrosine 271. FAD is bound by residues aspartate 369 and glycine 382.

It belongs to the paxM FAD-dependent monooxygenase family. The cofactor is FAD.

Its pathway is secondary metabolite biosynthesis. Functionally, FAD-dependent monooxygenase; part of the gene cluster that mediates the biosynthesis of monodictyphenone, a prenyl xanthone derivative. The pathway begins with the synthesis of atrochrysone thioester by the polyketide synthase (PKS) mdpG. The atrochrysone carboxyl ACP thioesterase mdpF then breaks the thioester bond and releases the atrochrysone carboxylic acid from mdpG. The atrochrysone carboxylic acid is then converted to atrochrysone which is further transformed into emodin anthrone. The next step is performed by the anthrone oxygenase mdpH that catalyzes the oxidation of emodinanthrone to emodin. Emodin is further modified to yield monodictyphenone via several steps involving mdpB, mdpC mdpJ, mdpK and mdpL. These enzymes with xptA, xptB and xptC are also proposed to be involved in the synthesis of shamixanthone from emodin. Especially, direct reduction of emodin by the short chain dehydrogenase mdpC followed by dehydration catalyzed by the scytalone dehydratase-like protein mdpB gives loss of oxygen and formation of chrysophanol intermediate in two simple steps. The polypeptide is FAD-dependent monooxygenase mdpD (Emericella nidulans (strain FGSC A4 / ATCC 38163 / CBS 112.46 / NRRL 194 / M139) (Aspergillus nidulans)).